We begin with the raw amino-acid sequence, 97 residues long: Co-chaperonin GroES (97 aa).

This sequence belongs to the GroES chaperonin family. In terms of assembly, heptamer of 7 subunits arranged in a ring. Interacts with the chaperonin GroEL.

It localises to the cytoplasm. In terms of biological role, together with the chaperonin GroEL, plays an essential role in assisting protein folding. The GroEL-GroES system forms a nano-cage that allows encapsulation of the non-native substrate proteins and provides a physical environment optimized to promote and accelerate protein folding. GroES binds to the apical surface of the GroEL ring, thereby capping the opening of the GroEL channel. The sequence is that of Co-chaperonin GroES from Edwardsiella ictaluri (strain 93-146).